The sequence spans 24 residues: Large ribosomal subunit protein uL10 (24 aa).

It belongs to the universal ribosomal protein uL10 family. In terms of assembly, part of the ribosomal stalk of the 50S ribosomal subunit. The N-terminus interacts with L11 and the large rRNA to form the base of the stalk. The C-terminus forms an elongated spine to which L12 dimers bind in a sequential fashion forming a multimeric L10(L12)X complex.

Forms part of the ribosomal stalk, playing a central role in the interaction of the ribosome with GTP-bound translation factors. The chain is Large ribosomal subunit protein uL10 (rplJ) from Enterobacter cloacae.